We begin with the raw amino-acid sequence, 763 residues long: Xaa-Pro dipeptidyl-peptidase (763 aa).

Residues Ser348, Asp468, and His498 each act as charge relay system in the active site.

This sequence belongs to the peptidase S15 family. Homodimer.

The protein resides in the cytoplasm. The enzyme catalyses Hydrolyzes Xaa-Pro-|- bonds to release unblocked, N-terminal dipeptides from substrates including Ala-Pro-|-p-nitroanilide and (sequentially) Tyr-Pro-|-Phe-Pro-|-Gly-Pro-|-Ile.. In terms of biological role, removes N-terminal dipeptides sequentially from polypeptides having unsubstituted N-termini provided that the penultimate residue is proline. The polypeptide is Xaa-Pro dipeptidyl-peptidase (pepX) (Lactococcus lactis subsp. lactis (strain IL1403) (Streptococcus lactis)).